The following is a 416-amino-acid chain: Nuclear hormone receptor family member nhr-67 (416 aa).

A DNA-binding region (nuclear receptor) is located at residues 18–98 (DVDCRVCEDH…IGMNKDAVQH (81 aa)). 2 NR C4-type zinc fingers span residues 21-41 (CRVCEDHSSGKHYSIFSCDGC) and 57-86 (CKNKGSPSEGQCKVDKTHRNQCRACRLRKC). Residues 331 to 398 (KTETEEGEDI…SSRPRHSIRS (68 aa)) are disordered. The segment covering 335–346 (EEGEDIEEEDDA) has biased composition (acidic residues). Residues 377–390 (SSTQPSSASSPSSS) show a composition bias toward low complexity.

It belongs to the nuclear hormone receptor family. In terms of tissue distribution, expressed in linker cell.

It localises to the nucleus. Orphan nuclear receptor that binds DNA containing an extended core motif half-site sequence 5'-AAGTCA-3'. In males, plays an essential role in the migration of the linker cell which guides gonad elongation during the L3 and L4 stages of larval development by negatively regulating the expression of netrin receptor unc-5 at the mid-L3 stage. Involved in the regulation of non-apoptotic cell death in the linker cell, acting upstream of or in parallel to transcription factor hsf-1. Represses hypoxia response genes, fmo-2 and acs-2, in both normoxic and hypoxic conditions, probably acting via repression of nuclear receptor nhr-49. The polypeptide is Nuclear hormone receptor family member nhr-67 (nhr-67) (Caenorhabditis elegans).